We begin with the raw amino-acid sequence, 482 residues long: Glutamate--tRNA ligase (482 aa).

The 'HIGH' region signature appears at 9-19 (PSPTGPIHVGN). Zn(2+)-binding residues include Cys106, Cys108, Cys133, and Asp135. The short motif at 250–254 (KLSKR) is the 'KMSKS' region element. ATP is bound at residue Lys253.

Belongs to the class-I aminoacyl-tRNA synthetase family. Glutamate--tRNA ligase type 1 subfamily. In terms of assembly, monomer. It depends on Zn(2+) as a cofactor.

The protein resides in the cytoplasm. It catalyses the reaction tRNA(Glu) + L-glutamate + ATP = L-glutamyl-tRNA(Glu) + AMP + diphosphate. Functionally, catalyzes the attachment of glutamate to tRNA(Glu) in a two-step reaction: glutamate is first activated by ATP to form Glu-AMP and then transferred to the acceptor end of tRNA(Glu). This Symbiobacterium thermophilum (strain DSM 24528 / JCM 14929 / IAM 14863 / T) protein is Glutamate--tRNA ligase.